Consider the following 111-residue polypeptide: Complement inhibitor CirpT1 (111 aa).

An N-terminal signal peptide occupies residues 1 to 19 (MATLIAARTKRKAPRVRIF). 4 disulfides stabilise this stretch: Cys40-Cys64, Cys59-Cys98, Cys76-Cys99, and Cys85-Cys104.

This sequence belongs to the CirpT family. Expressed in salivary glands.

The protein localises to the secreted. Complement inhibitor. Prevents complement-mediated activation of C5 by sterically preventing direct binding of C5 to its convertase (binding with domains MG4 and MG5). Binds C5 at a different binding site than the other tick complement inhibitors OmCI and RaCI3, and the drug eculizumab. Inhibits the complement in human, rat and guinea pig, and also shows a reduced inhibition in rabbit and pig. This Rhipicephalus pulchellus (Yellow backed tick) protein is Complement inhibitor CirpT1.